Reading from the N-terminus, the 322-residue chain is Sideroflexin-2 (322 aa).

Methionine 1 bears the N-acetylmethionine mark. Transmembrane regions (helical) follow at residues 99–119 (GMLITGFMLQFYRTMPAVIFW), 147–167 (ALSYFTATTTAVATAVGMNMW), 174–194 (LVGRWVPFAAVAAANCVNIPM), 223–243 (VGIAQVVISRITMAAPGMILL), and 266–286 (LQVLLCGCFLLFMVPVACGLF).

It belongs to the sideroflexin family. As to expression, expressed in brain, heart, kidney, spleen, thymus, liver, stomach and skin.

The protein resides in the mitochondrion inner membrane. It localises to the mitochondrion outer membrane. It catalyses the reaction L-serine(in) = L-serine(out). Mitochondrial amino-acid transporter that mediates transport of serine into mitochondria. Involved in mitochondrial iron homeostasis by regulating heme biosynthesis. This Mus musculus (Mouse) protein is Sideroflexin-2.